The following is a 295-amino-acid chain: uncharacterized protein (295 aa).

The segment covering 57 to 67 has biased composition (basic residues); sequence RKLLVKQKRKS. A disordered region spans residues 57 to 94; it reads RKLLVKQKRKSNKEFQSNIIKKRKDEERKGTLKTEQAN. The span at 79–88 shows a compositional bias: basic and acidic residues; it reads RKDEERKGTL. Coiled coils occupy residues 87–116 and 259–286; these read TLKTEQANEEELLQRSRLELERKAKKYDQY and DVLTLRDKKLEERRKFLERDYAIKLGER.

It localises to the nucleus. This is an uncharacterized protein from Schizosaccharomyces pombe (strain 972 / ATCC 24843) (Fission yeast).